We begin with the raw amino-acid sequence, 320 residues long: Aspartate carbamoyltransferase catalytic subunit (320 aa).

Carbamoyl phosphate is bound by residues Arg-68 and Thr-69. Lys-96 contributes to the L-aspartate binding site. Residues Arg-118, His-148, and Gln-151 each contribute to the carbamoyl phosphate site. Residues Arg-181 and Arg-236 each contribute to the L-aspartate site. 2 residues coordinate carbamoyl phosphate: Gly-277 and Pro-278.

It belongs to the aspartate/ornithine carbamoyltransferase superfamily. ATCase family. As to quaternary structure, heterododecamer (2C3:3R2) of six catalytic PyrB chains organized as two trimers (C3), and six regulatory PyrI chains organized as three dimers (R2).

The enzyme catalyses carbamoyl phosphate + L-aspartate = N-carbamoyl-L-aspartate + phosphate + H(+). The protein operates within pyrimidine metabolism; UMP biosynthesis via de novo pathway; (S)-dihydroorotate from bicarbonate: step 2/3. Catalyzes the condensation of carbamoyl phosphate and aspartate to form carbamoyl aspartate and inorganic phosphate, the committed step in the de novo pyrimidine nucleotide biosynthesis pathway. The polypeptide is Aspartate carbamoyltransferase catalytic subunit (Methylibium petroleiphilum (strain ATCC BAA-1232 / LMG 22953 / PM1)).